Reading from the N-terminus, the 192-residue chain is Leucine-rich repeat-containing protein 51 (192 aa).

3 LRR repeats span residues 50–71, 80–101, and 103–124; these read MTQS…NHAV, NLAW…LTTF, and NLSV…NKLA. The LRRCT domain maps to 137–175; that stretch reads NPIEEEKGYRQYVLCTLPHITTFDFSGVTKADRTTAEVW.

Its subcellular location is the cytoplasm. This Bos taurus (Bovine) protein is Leucine-rich repeat-containing protein 51.